The primary structure comprises 222 residues: MGLFGKTQEKPPKELVNEWSLKIRKEMRVVDRQIRDIQREEEKVKRSVKDAAKKGQKDVCVVLAKEMIRSRKAVSKLYASKAHMNSVLMGMKNQLAVLRVAGSLQKSTEVMKAMQSLVKIPEIRATMRELSKEMMKAGIIEEMLEDTFESMDDQEEMEEAAEMEIDRILFEITAGALGKAPSKVTDALPEPEPSGAMAASDEEEEEEEALEAMQSRLATLRS.

Gly2 carries N-myristoyl glycine lipidation. The tract at residues 2–113 (GLFGKTQEKP…LQKSTEVMKA (112 aa)) is intramolecular interaction with C-terminus. Positions 22–54 (KIRKEMRVVDRQIRDIQREEEKVKRSVKDAAKK) form a coiled coil. Important for autoinhibitory function stretches follow at residues 59–64 (VCVVLA) and 168–169 (IL). The stretch at 149-222 (ESMDDQEEME…MQSRLATLRS (74 aa)) forms a coiled coil. The tract at residues 151–220 (MDDQEEMEEA…EAMQSRLATL (70 aa)) is intramolecular interaction with N-terminus. An interaction with VPS4A region spans residues 151–222 (MDDQEEMEEA…MQSRLATLRS (72 aa)). Lys179 is covalently cross-linked (Glycyl lysine isopeptide (Lys-Gly) (interchain with G-Cter in ubiquitin)). Positions 180–222 (APSKVTDALPEPEPSGAMAASDEEEEEEEALEAMQSRLATLRS) are disordered. 3 interaction with STAMBP regions span residues 196–222 (AMAA…TLRS), 203–207 (EEEEE), and 221–222 (RS). At Ser200 the chain carries Phosphoserine. Positions 200-210 (SDEEEEEEEAL) are enriched in acidic residues. Residues 201–211 (DEEEEEEEALE) carry the MIT-interacting motif motif.

The protein belongs to the SNF7 family. Probable core component of the endosomal sorting required for transport complex III (ESCRT-III). ESCRT-III components are thought to multimerize to form a flat lattice on the perimeter membrane of the endosome. Several assembly forms of ESCRT-III may exist that interact and act sequentially. Forms a metastable monomer in solution; its core structure (without part of the putative autoinhibitory C-terminal acidic region) oligomerizes into a flat lattice via two different dimerization interfaces. In vitro, heteromerizes with CHMP2A (but not CHMP4) to form helical tubular structures that expose membrane-interacting sites on the outside whereas VPS4B can associate on the inside of the tubule. May interact with IGFBP7; the relevance of such interaction however remains unclear. Interacts with CHMP2A. Interacts with CHMP4A; the interaction requires the release of CHMP4A autoinhibition. Interacts with VPS4A. Interacts with STAMBP; the interaction appears to relieve the autoinhibition of CHMP3. Interacts with VTA1.

The protein localises to the cytoplasm. Its subcellular location is the cytosol. It localises to the membrane. The protein resides in the endosome. It is found in the late endosome membrane. Probable core component of the endosomal sorting required for transport complex III (ESCRT-III) which is involved in multivesicular bodies (MVBs) formation and sorting of endosomal cargo proteins into MVBs. MVBs contain intraluminal vesicles (ILVs) that are generated by invagination and scission from the limiting membrane of the endosome and mostly are delivered to lysosomes enabling degradation of membrane proteins, such as stimulated growth factor receptors, lysosomal enzymes and lipids. The MVB pathway appears to require the sequential function of ESCRT-O, -I,-II and -III complexes. ESCRT-III proteins mostly dissociate from the invaginating membrane before the ILV is released. The ESCRT machinery also functions in topologically equivalent membrane fission events, such as the terminal stages of cytokinesis and the budding of enveloped viruses (lentiviruses). ESCRT-III proteins are believed to mediate the necessary vesicle extrusion and/or membrane fission activities, possibly in conjunction with the AAA ATPase VPS4. Selectively binds to phosphatidylinositol 3,5-bisphosphate PtdIns(3,5)P2 and PtdIns(3,4)P2 in preference to other phosphoinositides tested. Involved in late stages of cytokinesis. Plays a role in endosomal sorting/trafficking of EGF receptor. The chain is Charged multivesicular body protein 3 (CHMP3) from Macaca fascicularis (Crab-eating macaque).